A 155-amino-acid polypeptide reads, in one-letter code: 6,7-dimethyl-8-ribityllumazine synthase (155 aa).

Residues Phe22, 56–58, and 80–82 contribute to the 5-amino-6-(D-ribitylamino)uracil site; these read AFE and AVI. 85–86 contributes to the (2S)-2-hydroxy-3-oxobutyl phosphate binding site; the sequence is ST. Catalysis depends on His88, which acts as the Proton donor. Residue Phe113 coordinates 5-amino-6-(D-ribitylamino)uracil. (2S)-2-hydroxy-3-oxobutyl phosphate is bound at residue Arg127.

It belongs to the DMRL synthase family.

It carries out the reaction (2S)-2-hydroxy-3-oxobutyl phosphate + 5-amino-6-(D-ribitylamino)uracil = 6,7-dimethyl-8-(1-D-ribityl)lumazine + phosphate + 2 H2O + H(+). It participates in cofactor biosynthesis; riboflavin biosynthesis; riboflavin from 2-hydroxy-3-oxobutyl phosphate and 5-amino-6-(D-ribitylamino)uracil: step 1/2. In terms of biological role, catalyzes the formation of 6,7-dimethyl-8-ribityllumazine by condensation of 5-amino-6-(D-ribitylamino)uracil with 3,4-dihydroxy-2-butanone 4-phosphate. This is the penultimate step in the biosynthesis of riboflavin. This Caldicellulosiruptor bescii (strain ATCC BAA-1888 / DSM 6725 / KCTC 15123 / Z-1320) (Anaerocellum thermophilum) protein is 6,7-dimethyl-8-ribityllumazine synthase.